We begin with the raw amino-acid sequence, 143 residues long: Large ribosomal subunit protein uL13 (143 aa).

It belongs to the universal ribosomal protein uL13 family. As to quaternary structure, part of the 50S ribosomal subunit.

Functionally, this protein is one of the early assembly proteins of the 50S ribosomal subunit, although it is not seen to bind rRNA by itself. It is important during the early stages of 50S assembly. In Dehalococcoides mccartyi (strain ATCC BAA-2100 / JCM 16839 / KCTC 5957 / BAV1), this protein is Large ribosomal subunit protein uL13.